The sequence spans 125 residues: Glycine cleavage system H protein (125 aa).

The 83-residue stretch at 19–101 folds into the Lipoyl-binding domain; sequence VAVVGISDYA…EGKGWFMKLK (83 aa). N6-lipoyllysine is present on K60.

Belongs to the GcvH family. In terms of assembly, the glycine cleavage system is composed of four proteins: P, T, L and H. Requires (R)-lipoate as cofactor.

Functionally, the glycine cleavage system catalyzes the degradation of glycine. The H protein shuttles the methylamine group of glycine from the P protein to the T protein. The sequence is that of Glycine cleavage system H protein from Xanthobacter autotrophicus (strain ATCC BAA-1158 / Py2).